We begin with the raw amino-acid sequence, 411 residues long: ATP-dependent Clp protease ATP-binding subunit ClpX (411 aa).

Residues 1-51 (MAKKKDEEYCSFCGMPRTQVNLMLEGVHAHICDECALRAGEVVREALQKFK) enclose the ClpX-type ZB domain. Positions 10, 13, 32, and 35 each coordinate Zn(2+). 119-126 (PTGTGKTL) provides a ligand contact to ATP.

The protein belongs to the ClpX chaperone family. Component of the ClpX-ClpP complex. Forms a hexameric ring that, in the presence of ATP, binds to fourteen ClpP subunits assembled into a disk-like structure with a central cavity, resembling the structure of eukaryotic proteasomes.

In terms of biological role, ATP-dependent specificity component of the Clp protease. It directs the protease to specific substrates. Can perform chaperone functions in the absence of ClpP. This is ATP-dependent Clp protease ATP-binding subunit ClpX from Porphyromonas gingivalis (strain ATCC 33277 / DSM 20709 / CIP 103683 / JCM 12257 / NCTC 11834 / 2561).